We begin with the raw amino-acid sequence, 313 residues long: Ribosomal RNA small subunit methyltransferase H (313 aa).

Residues 35–37, D55, F79, D101, and Q108 each bind S-adenosyl-L-methionine; that span reads GGH.

Belongs to the methyltransferase superfamily. RsmH family.

The protein resides in the cytoplasm. It catalyses the reaction cytidine(1402) in 16S rRNA + S-adenosyl-L-methionine = N(4)-methylcytidine(1402) in 16S rRNA + S-adenosyl-L-homocysteine + H(+). In terms of biological role, specifically methylates the N4 position of cytidine in position 1402 (C1402) of 16S rRNA. The sequence is that of Ribosomal RNA small subunit methyltransferase H from Salmonella paratyphi A (strain ATCC 9150 / SARB42).